Reading from the N-terminus, the 111-residue chain is Ribosome-binding factor A (111 aa).

This sequence belongs to the RbfA family. Monomer. Binds 30S ribosomal subunits, but not 50S ribosomal subunits or 70S ribosomes.

It is found in the cytoplasm. One of several proteins that assist in the late maturation steps of the functional core of the 30S ribosomal subunit. Associates with free 30S ribosomal subunits (but not with 30S subunits that are part of 70S ribosomes or polysomes). Required for efficient processing of 16S rRNA. May interact with the 5'-terminal helix region of 16S rRNA. In Helicobacter pylori (strain HPAG1), this protein is Ribosome-binding factor A.